A 547-amino-acid polypeptide reads, in one-letter code: Glucose-6-phosphate isomerase (547 aa).

The active-site Proton donor is Glu351. Active-site residues include His382 and Lys509.

Belongs to the GPI family.

The protein resides in the cytoplasm. The enzyme catalyses alpha-D-glucose 6-phosphate = beta-D-fructose 6-phosphate. Its pathway is carbohydrate biosynthesis; gluconeogenesis. It participates in carbohydrate degradation; glycolysis; D-glyceraldehyde 3-phosphate and glycerone phosphate from D-glucose: step 2/4. Functionally, catalyzes the reversible isomerization of glucose-6-phosphate to fructose-6-phosphate. The polypeptide is Glucose-6-phosphate isomerase (Coxiella burnetii (strain Dugway 5J108-111)).